We begin with the raw amino-acid sequence, 454 residues long: Maintenance of mitochondrial morphology protein 1 (454 aa).

Topologically, residues 1-117 (MESNYTGMDG…SFSSWSFAQG (117 aa)) are lumenal. Residues 118 to 138 (LIVGQVSVVLVLIFFIKFFIF) traverse the membrane as a helical segment. Over 139–454 (SDSSTKTNPN…ESEPGRETHY (316 aa)) the chain is Cytoplasmic. Residues 144-164 (KTNPNPAKNSSSTNSLSGLSS) are disordered. Residues 153–164 (SSSTNSLSGLSS) are compositionally biased toward low complexity. One can recognise an SMP-LTD domain in the interval 215-427 (PAESLDWFNV…EPRFQFIKLP (213 aa)). Positions 253, 411, 415, 430, 432, and 433 each coordinate a 1,2-diacyl-sn-glycero-3-phosphate. Positions 434-454 (KNTREGKADVDESEPGRETHY) are disordered. The segment covering 435–454 (NTREGKADVDESEPGRETHY) has biased composition (basic and acidic residues).

It belongs to the MMM1 family. Homodimer. Component of the ER-mitochondria encounter structure (ERMES) or MDM complex, composed of MMM1, MDM10, MDM12 and MDM34. An MMM1 homodimer associates with one molecule of MDM12 on each side in a pairwise head-to-tail manner, and the SMP-LTD domains of MMM1 and MDM12 generate a continuous hydrophobic tunnel for phospholipid trafficking.

The protein localises to the endoplasmic reticulum membrane. Component of the ERMES/MDM complex, which serves as a molecular tether to connect the endoplasmic reticulum (ER) and mitochondria. Components of this complex are involved in the control of mitochondrial shape and protein biogenesis, and function in nonvesicular lipid trafficking between the ER and mitochondria. Preferentially binds to glycerophospholipids such as phosphatidylcholoine (PC), phosphatidic acid (PA), phosphatidylglycerol (PG), and phosphatidylserine (PS), but not to phosphatidylethanolamine (PE). The MDM12-MMM1 subcomplex functions in the major beta-barrel assembly pathway that is responsible for biogenesis of all outer membrane beta-barrel proteins, and acts in a late step after the SAM complex. The MDM10-MDM12-MMM1 subcomplex further acts in the TOM40-specific pathway after the action of the MDM12-MMM1 complex. Essential for establishing and maintaining the structure of mitochondria and maintenance of mtDNA nucleoids. The polypeptide is Maintenance of mitochondrial morphology protein 1 (Zygosaccharomyces rouxii (strain ATCC 2623 / CBS 732 / NBRC 1130 / NCYC 568 / NRRL Y-229)).